The primary structure comprises 699 residues: Methylcrotonoyl-CoA carboxylase subunit alpha, mitochondrial (699 aa).

Positions 30-475 (ITKILIANRG…ETGFIPIHRE (446 aa)) constitute a Biotin carboxylation domain. ATP is bound by residues K144, E228, and H263. The ATP-grasp domain occupies 148-345 (KDIMIKAGVP…LVEWQLKVAE (198 aa)). The active site involves R320. One can recognise a Biotinyl-binding domain in the interval 624–699 (KGADGVLGSL…EDKKTLAVIV (76 aa)). K665 bears the N6-biotinyllysine mark.

In terms of assembly, probably a dodecamer composed of six biotin-containing alpha subunits and six beta subunits. Mn(2+) is required as a cofactor. Requires biotin as cofactor.

It is found in the mitochondrion matrix. It carries out the reaction 3-methylbut-2-enoyl-CoA + hydrogencarbonate + ATP = 3-methyl-(2E)-glutaconyl-CoA + ADP + phosphate + H(+). Its pathway is amino-acid degradation; L-leucine degradation; (S)-3-hydroxy-3-methylglutaryl-CoA from 3-isovaleryl-CoA: step 2/3. Biotin-attachment subunit of the 3-methylcrotonyl-CoA carboxylase, an enzyme that catalyzes the conversion of 3-methylcrotonyl-CoA to 3-methylglutaconyl-CoA, a critical step for leucine and isovaleric acid catabolism. In Dictyostelium discoideum (Social amoeba), this protein is Methylcrotonoyl-CoA carboxylase subunit alpha, mitochondrial (mccA).